Reading from the N-terminus, the 591-residue chain is METVEAGHDDVIGWFEHVSENACKVQSETLRRILELNSGVEYLRKWLGTVDVEKMDDYTLETLFTSLVPIVSHADLDPYIQRIADGETSPLLTQEPITVLSLSSGTTEGRQKYVPFTRHSAQTTLQIFRLSAAYRSRFYPIREGGRILEFIYAGKEFKTLGGLTVGTATTHYYASEEFKTKQETTKSFTCSPQEVISGGDFGQCTYCHLLLGLHYSSQVEFVASAFSYTIVQAFSFFEEIWREICADIKEGNLSSRITLPKMRKAVLALIRPNPSLASHIEEICLELETNLGWFGLISKLWPNAKFISSIMTGSMLPYLNKLRHYAGGLPLVSADYGSTESWIGVNVDPHLPPEDVSFAVIPTFSYFEFIPLYRRQNQSDICIDGDFVEDKPVPLSQVKLGQEYELVLTTFTGLYRYRLGDVVEVTSFHKGTPKLSFIYRRKLILTINIDKNTEKDLQRVVDKASQLLSRSTRAEVVDFTSHADVIARPGHYVIYWEIRGEADDKALEECCREMDTAFVDYGYVVSRRMNSIGPLELRVVERGTFGKVAERCVGKCGGLNQFKTPRCTTNSVMLDILNDSTIKRFRSSAYD.

Belongs to the IAA-amido conjugating enzyme family. As to expression, expressed in cotyledons and hypocotyls.

Functionally, catalyzes the synthesis of indole-3-acetic acid (IAA)-amino acid conjugates, providing a mechanism for the plant to cope with the presence of excess auxin. Involved in red light-specific hypocotyl elongation. May act downstream of a red light signal transduction and determine the degree of hypocotyl elongation. This is Indole-3-acetic acid-amido synthetase GH3.10 from Arabidopsis thaliana (Mouse-ear cress).